Reading from the N-terminus, the 313-residue chain is Ribosomal RNA small subunit methyltransferase H (313 aa).

Residues 35-37 (GGH), Asp-55, Phe-79, Asp-101, and Gln-108 each bind S-adenosyl-L-methionine.

It belongs to the methyltransferase superfamily. RsmH family.

Its subcellular location is the cytoplasm. It catalyses the reaction cytidine(1402) in 16S rRNA + S-adenosyl-L-methionine = N(4)-methylcytidine(1402) in 16S rRNA + S-adenosyl-L-homocysteine + H(+). Specifically methylates the N4 position of cytidine in position 1402 (C1402) of 16S rRNA. The sequence is that of Ribosomal RNA small subunit methyltransferase H from Salmonella typhi.